A 566-amino-acid chain; its full sequence is CTP synthase (566 aa).

The segment at Met-1–Leu-265 is amidoligase domain. Ser-13 contributes to the CTP binding site. Residue Ser-13 coordinates UTP. ATP-binding positions include Ser-14–Ile-19 and Asp-71. Mg(2+) contacts are provided by Asp-71 and Glu-139. Residues Asp-146–Glu-148, Lys-186–Gln-191, and Lys-222 contribute to the CTP site. UTP is bound by residues Lys-186–Gln-191 and Lys-222. In terms of domain architecture, Glutamine amidotransferase type-1 spans Glu-290–Lys-543. An L-glutamine-binding site is contributed by Gly-351. The active-site Nucleophile; for glutamine hydrolysis is the Cys-378. Residues Leu-379–Gln-382, Glu-402, and Arg-469 each bind L-glutamine. Catalysis depends on residues His-516 and Glu-518. The segment at Pro-545–Gln-566 is disordered.

Belongs to the CTP synthase family. As to quaternary structure, homotetramer.

It catalyses the reaction UTP + L-glutamine + ATP + H2O = CTP + L-glutamate + ADP + phosphate + 2 H(+). The catalysed reaction is L-glutamine + H2O = L-glutamate + NH4(+). The enzyme catalyses UTP + NH4(+) + ATP = CTP + ADP + phosphate + 2 H(+). It functions in the pathway pyrimidine metabolism; CTP biosynthesis via de novo pathway; CTP from UDP: step 2/2. Its activity is regulated as follows. Allosterically activated by GTP, when glutamine is the substrate; GTP has no effect on the reaction when ammonia is the substrate. The allosteric effector GTP functions by stabilizing the protein conformation that binds the tetrahedral intermediate(s) formed during glutamine hydrolysis. Inhibited by the product CTP, via allosteric rather than competitive inhibition. Its function is as follows. Catalyzes the ATP-dependent amination of UTP to CTP with either L-glutamine or ammonia as the source of nitrogen. Regulates intracellular CTP levels through interactions with the four ribonucleotide triphosphates. This chain is CTP synthase, found in Nitrosospira multiformis (strain ATCC 25196 / NCIMB 11849 / C 71).